Consider the following 771-residue polypeptide: Probable aconitate hydratase, mitochondrial (771 aa).

Residues Gln-86 and 179-181 (DSH) each bind substrate. Positions 372, 435, and 438 each coordinate [4Fe-4S] cluster. Substrate-binding positions include Arg-461, Arg-466, Arg-594, and 657 to 658 (SR).

Belongs to the aconitase/IPM isomerase family. As to quaternary structure, monomer. It depends on [4Fe-4S] cluster as a cofactor.

Its subcellular location is the mitochondrion. The enzyme catalyses citrate = D-threo-isocitrate. It participates in carbohydrate metabolism; tricarboxylic acid cycle; isocitrate from oxaloacetate: step 2/2. Its function is as follows. Catalyzes the isomerization of citrate to isocitrate via cis-aconitate. The sequence is that of Probable aconitate hydratase, mitochondrial (aco2) from Dictyostelium discoideum (Social amoeba).